Consider the following 192-residue polypeptide: Pyridoxal 5'-phosphate synthase subunit PdxT (192 aa).

Position 46-48 (46-48) interacts with L-glutamine; the sequence is GES. The active-site Nucleophile is the cysteine 76. L-glutamine contacts are provided by residues arginine 103 and 131 to 132; that span reads IR. Active-site charge relay system residues include histidine 167 and glutamate 169.

This sequence belongs to the glutaminase PdxT/SNO family. In terms of assembly, in the presence of PdxS, forms a dodecamer of heterodimers. Only shows activity in the heterodimer.

The catalysed reaction is aldehydo-D-ribose 5-phosphate + D-glyceraldehyde 3-phosphate + L-glutamine = pyridoxal 5'-phosphate + L-glutamate + phosphate + 3 H2O + H(+). It carries out the reaction L-glutamine + H2O = L-glutamate + NH4(+). Its pathway is cofactor biosynthesis; pyridoxal 5'-phosphate biosynthesis. Catalyzes the hydrolysis of glutamine to glutamate and ammonia as part of the biosynthesis of pyridoxal 5'-phosphate. The resulting ammonia molecule is channeled to the active site of PdxS. The chain is Pyridoxal 5'-phosphate synthase subunit PdxT from Koribacter versatilis (strain Ellin345).